A 190-amino-acid polypeptide reads, in one-letter code: Probable nicotinate-nucleotide adenylyltransferase (190 aa).

This sequence belongs to the NadD family.

It carries out the reaction nicotinate beta-D-ribonucleotide + ATP + H(+) = deamido-NAD(+) + diphosphate. The protein operates within cofactor biosynthesis; NAD(+) biosynthesis; deamido-NAD(+) from nicotinate D-ribonucleotide: step 1/1. Catalyzes the reversible adenylation of nicotinate mononucleotide (NaMN) to nicotinic acid adenine dinucleotide (NaAD). In Myxococcus xanthus (strain DK1622), this protein is Probable nicotinate-nucleotide adenylyltransferase.